The sequence spans 413 residues: MGIFCSVIKFENLQDLRRLCHWGPIIALGVIAICSTMAMIDSVLWYWPLHTTGGSVNFIMLINWTVMILYNYFNAMFAGPGFVPRGWKPEKSQDSMYLQYCKVCQAYKAPRSHHCRKCNRCVMKMDHHCPWINNCCGHQNHASFTLFLLLAPLGCTHAAFIFVMTMYTQLYNRLSFGWNTVKIDMSAARRDPPPIVPFGLAAFAATLFALGLALGTTIAVGMLFFIQIKIILRNKTSIESWIEEKAKDRIQYYQLDEVFIFPYDMGSKWKNFKQVFTWSGVPEGDGLEWPIREGCDQYSLTIEQLKQKADKRVRSVRYKVIEDYNGACCPLNRGVRTFFTSPCTEEPRIRLQKGEFILATRGLRYWLYGDKILDDSFIEGTSRVRGWFPRNCVEKCPCDGDSDPAPEGEKKNR.

Residues 1 to 24 (MGIFCSVIKFENLQDLRRLCHWGP) lie on the Cytoplasmic side of the membrane. The chain crosses the membrane as a helical span at residues 25 to 45 (IIALGVIAICSTMAMIDSVLW). Topologically, residues 46-57 (YWPLHTTGGSVN) are lumenal. The chain crosses the membrane as a helical span at residues 58-78 (FIMLINWTVMILYNYFNAMFA). The Cytoplasmic segment spans residues 79-143 (GPGFVPRGWK…NCCGHQNHAS (65 aa)). The DHHC domain occupies 99 to 149 (QYCKVCQAYKAPRSHHCRKCNRCVMKMDHHCPWINNCCGHQNHASFTLFLL). The active-site S-palmitoyl cysteine intermediate is Cys-129. Residues 144 to 164 (FTLFLLLAPLGCTHAAFIFVM) form a helical membrane-spanning segment. Topologically, residues 165–194 (TMYTQLYNRLSFGWNTVKIDMSAARRDPPP) are lumenal. A helical transmembrane segment spans residues 195 to 215 (IVPFGLAAFAATLFALGLALG). The Cytoplasmic segment spans residues 216–413 (TTIAVGMLFF…PAPEGEKKNR (198 aa)). In terms of domain architecture, SH3 spans 313–398 (VRSVRYKVIE…PRNCVEKCPC (86 aa)). S-palmitoyl cysteine attachment occurs at residues Cys-328, Cys-329, and Cys-343. The short motif at 410–413 (KKNR) is the Di-lysine motif element.

It belongs to the DHHC palmitoyltransferase family. As to quaternary structure, homooligomerizes. Interacts with SELENOK. Palmitoylated at 3 different sites by ZDHHC16. The combination of the different palmitoylation events strongly affects the quaternary assembly of ZDHHC6, its localization, stability and function. Palmitoylation at Cys-328 accelerates the turnover of ZDHHC6. Depalmitoylated by LYPLA2.

The protein resides in the endoplasmic reticulum membrane. It carries out the reaction L-cysteinyl-[protein] + hexadecanoyl-CoA = S-hexadecanoyl-L-cysteinyl-[protein] + CoA. The catalysed reaction is L-cysteinyl-[protein] + octadecanoyl-CoA = S-octadecanoyl-L-cysteinyl-[protein] + CoA. Endoplasmic reticulum palmitoyl acyltransferase that mediates palmitoylation of proteins such as AMFR, CALX, ITPR1 and TFRC. Palmitoylates calnexin (CALX), which is required for its association with the ribosome-translocon complex and efficient folding of glycosylated proteins. Mediates palmitoylation of AMFR, promoting AMFR distribution to the peripheral endoplasmic reticulum. Together with SELENOK, palmitoylates ITPR1 in immune cells, leading to regulate ITPR1 stability and function. Stearoyltransferase that mediates stearoylation of TFRC to inhibit TFRC-mediated activation of the JNK pathway and mitochondrial fragmentation. This is Palmitoyltransferase ZDHHC6 from Mus musculus (Mouse).